A 522-amino-acid polypeptide reads, in one-letter code: Zinc finger protein STOP1 homolog (522 aa).

Composition is skewed to polar residues over residues 1-12 (MDSGLGRSSETS) and 19-40 (MASN…SSMD). Disordered regions lie at residues 1 to 43 (MDSG…DQPP) and 234 to 260 (CGGE…EREN). Over residues 244 to 260 (MEDHDVKESDDGGEREN) the composition is skewed to basic and acidic residues. A C2H2-type 1 zinc finger spans residues 282–304 (HFCLICGKGFKRDANLRMHMRGH). The C2H2-type 2; atypical zinc-finger motif lies at 390–421 (KHCGRDKWLCSCGTTFSRKDKLFGHVALFQGH).

It localises to the nucleus. Probable transcription factor that may be involved in aluminum tolerance. This is Zinc finger protein STOP1 homolog from Oryza sativa subsp. japonica (Rice).